A 211-amino-acid chain; its full sequence is MRKLSFLDRVIEELDSYARFTKAPLNPSKKSPSSDTIDGKLSEVEKKHSAGLMRVDYTGEICAQGLYRGQASVAKSPQTKEHLYHAAAEEYDHLAWCGERLQELGARPSLLNPFWYWASFGIGAVAGSISDGLSYGFVVETEKQVMKHLDSHLKSLPMNDNRSREILKQMYIDESEHAVEAEKAGGKKLPKTVKAIMKLQSKVMTTLAYRF.

6 residues coordinate Fe cation: glutamate 60, glutamate 90, histidine 93, glutamate 142, glutamate 174, and histidine 177.

Belongs to the COQ7 family. Fe cation is required as a cofactor.

The protein resides in the cell membrane. The catalysed reaction is a 5-methoxy-2-methyl-3-(all-trans-polyprenyl)benzene-1,4-diol + AH2 + O2 = a 3-demethylubiquinol + A + H2O. Its pathway is cofactor biosynthesis; ubiquinone biosynthesis. In terms of biological role, catalyzes the hydroxylation of 2-nonaprenyl-3-methyl-6-methoxy-1,4-benzoquinol during ubiquinone biosynthesis. The chain is 3-demethoxyubiquinol 3-hydroxylase from Francisella tularensis subsp. novicida (strain U112).